Here is a 222-residue protein sequence, read N- to C-terminus: UPF0441 protein CKO_04429 (222 aa).

The span at 177–194 (TVPKTAMAPKPATTTTVT) shows a compositional bias: low complexity. The interval 177-222 (TVPKTAMAPKPATTTTVTRGGFGESVAKQSTMQRSATGTSNRSMGG) is disordered. The segment covering 203–222 (AKQSTMQRSATGTSNRSMGG) has biased composition (polar residues).

Belongs to the UPF0441 family.

The protein is UPF0441 protein CKO_04429 of Citrobacter koseri (strain ATCC BAA-895 / CDC 4225-83 / SGSC4696).